A 329-amino-acid polypeptide reads, in one-letter code: Ketol-acid reductoisomerase (NADP(+)) (329 aa).

Residues 1-181 (MKVYYEQDAN…GGTRSGVIET (181 aa)) form the KARI N-terminal Rossmann domain. NADP(+)-binding positions include 24 to 27 (YGSQ), Arg47, and 82 to 85 (DQYQ). Residue His107 is part of the active site. An NADP(+)-binding site is contributed by Gly133. The KARI C-terminal knotted domain occupies 182–327 (TFREETETDL…ARLRSMMPWL (146 aa)). 4 residues coordinate Mg(2+): Asp190, Glu194, Glu226, and Glu230. Residue Ser251 participates in substrate binding.

This sequence belongs to the ketol-acid reductoisomerase family. Requires Mg(2+) as cofactor.

It catalyses the reaction (2R)-2,3-dihydroxy-3-methylbutanoate + NADP(+) = (2S)-2-acetolactate + NADPH + H(+). It carries out the reaction (2R,3R)-2,3-dihydroxy-3-methylpentanoate + NADP(+) = (S)-2-ethyl-2-hydroxy-3-oxobutanoate + NADPH + H(+). The protein operates within amino-acid biosynthesis; L-isoleucine biosynthesis; L-isoleucine from 2-oxobutanoate: step 2/4. Its pathway is amino-acid biosynthesis; L-valine biosynthesis; L-valine from pyruvate: step 2/4. In terms of biological role, involved in the biosynthesis of branched-chain amino acids (BCAA). Catalyzes an alkyl-migration followed by a ketol-acid reduction of (S)-2-acetolactate (S2AL) to yield (R)-2,3-dihydroxy-isovalerate. In the isomerase reaction, S2AL is rearranged via a Mg-dependent methyl migration to produce 3-hydroxy-3-methyl-2-ketobutyrate (HMKB). In the reductase reaction, this 2-ketoacid undergoes a metal-dependent reduction by NADPH to yield (R)-2,3-dihydroxy-isovalerate. In Oleidesulfovibrio alaskensis (strain ATCC BAA-1058 / DSM 17464 / G20) (Desulfovibrio alaskensis), this protein is Ketol-acid reductoisomerase (NADP(+)).